Consider the following 788-residue polypeptide: MAMESTATAAVAAELVSADKIEDVPAPSTSADKVESLDVDSEAKKLLGLGQKHLVMGDIPAAVNAFQEAASLLGKKYGETANECGEAFFFYGKSLLELARMENGVLGNALEGVHVEEEEGEKTEDESLVENNDNIDEEAREELREQVYDAMGEKEEAKKTEDKSLAKPETDKEQDSEMEKGGREDMDISKSAEEPQEKVDLTLDWLTETSEEAKGGAAPEGPNEAEVTSGKPEQEVPDAEEEKSVSGTDVQEECREKGGQEKQGEVIVSIEEKPKEVSEEQPVVTLEKQGTAVEVEAESLDPTVKPVDVGGDEPEEKVVTSENEAGKAVLEQLVGQEVPPAEESPEVTTEAAEASAVEAGSEVSEKPGQEAPVLPKDGAVNGPSVVGDQTPIEPQTSIERLTETKDGSGLEEKVRAKLVPSQEETKLSVEESEAAGDGVDTKVAQGATEKSPEDKVQIAANEETQEREEQMKEGEETEGSEEDDKENDKTEEMPNDSVLENKSLQENEEEEIGNLELAWDMLDLAKIIFKRQETKEAQLYAAQAHLKLGEVSVESENYVQAVEEFQSCLNLQEQYLEAHDRLLAETHYQLGLAYGYNSQYDEAVAQFSKSIEVIENRMAVLNEQVKEAEGSSAEYKKEIEELKELLPEIREKIEDAKESQRSGNVAELALKATLVESSTSGFTPGGGGSSVSMIASRKPTDGASSSNCVTDISHLVRKKRKPEEESPRKDDAKKAKQEPEVNGGSGDAVPSGNEVSENMEEEAENQAESRAAVEGTVEAGATVESTAC.

Ala2 carries the post-translational modification N-acetylalanine. Position 33 is an N6-acetyllysine (Lys33). The TPR 1 repeat unit spans residues 43-76 (AKKLLGLGQKHLVMGDIPAAVNAFQEAASLLGKK). The disordered stretch occupies residues 114–139 (HVEEEEGEKTEDESLVENNDNIDEEA). A histone-binding region spans residues 116-127 (EEEEGEKTEDES). Positions 116–139 (EEEEGEKTEDESLVENNDNIDEEA) are enriched in acidic residues. Position 123 is a phosphothreonine (Thr123). The residue at position 127 (Ser127) is a Phosphoserine. Glu138 carries the post-translational modification Phosphothreonine. Position 141 is a phosphoserine (Glu141). Residues 151–201 (MGEKEEAKKTEDKSLAKPETDKEQDSEMEKGGREDMDISKSAEEPQEKVDL) show a composition bias toward basic and acidic residues. The segment at 151 to 507 (MGEKEEAKKT…VLENKSLQEN (357 aa)) is disordered. At Thr170 the chain carries Phosphothreonine. Phosphoserine occurs at positions 176, 189, and 191. The tract at residues 211–244 (EEAKGGAAPEGPNEAEVTSGKPEQEVPDAEEEKS) is histone-binding. Lys243 is modified (N6-acetyllysine). Ser244 is subject to Phosphoserine. Basic and acidic residues predominate over residues 252–278 (EECREKGGQEKQGEVIVSIEEKPKEVS). An N6-acetyllysine modification is found at Lys288. 2 positions are modified to phosphoserine: Ser299 and Ser321. Low complexity predominate over residues 337–362 (EVPPAEESPEVTTEAAEASAVEAGSE). Thr390 is modified (phosphothreonine). Phosphoserine is present on residues Ser397, Ser408, Ser421, and Ser451. The span at 400-415 (RLTETKDGSGLEEKVR) shows a compositional bias: basic and acidic residues. Thr464 and Thr477 each carry phosphothreonine. The interval 469–512 (EQMKEGEETEGSEEDDKENDKTEEMPNDSVLENKSLQENEEEEI) is histone-binding. A compositionally biased stretch (acidic residues) spans 475 to 485 (EETEGSEEDDK). Ser480 bears the Phosphoserine mark. Position 490 is a phosphothreonine (Thr490). Phosphoserine occurs at positions 497 and 503. TPR repeat units follow at residues 542–575 (AQAHLKLGEVSVESENYVQAVEEFQSCLNLQEQY) and 584–617 (AETHYQLGLAYGYNSQYDEAVAQFSKSIEVIENR). Residues 604–659 (VAQFSKSIEVIENRMAVLNEQVKEAEGSSAEYKKEIEELKELLPEIREKIEDAKES) are a coiled coil. The residue at position 662 (Ser662) is a Phosphoserine. The interval 678-788 (STSGFTPGGG…AGATVESTAC (111 aa)) is disordered. Thr683 carries the phosphothreonine modification. 2 positions are modified to phosphoserine: Ser705 and Ser706. Residues 716-722 (VRKKRKP) carry the Nuclear localization signal motif. Positions 721 to 739 (KPEEESPRKDDAKKAKQEP) are enriched in basic and acidic residues. Ser726 carries the post-translational modification Phosphoserine. Lys736 participates in a covalent cross-link: Glycyl lysine isopeptide (Lys-Gly) (interchain with G-Cter in SUMO1). Phosphoserine occurs at positions 745, 751, and 756.

It belongs to the NASP family. Binds to linker H1 histones. Interacts with histones H2A, H2B, H3 and H4. Interacts with histone H3.3. Interacts with histones H3 and H4; NASP is a histone chaperone that stabilizes and maintains a soluble pool of histone H3-H4 dimers. Interacts with ASF1A and ASF1B; the interaction is probably indirect and mediated by H3-H4. Also binds to HSP90 in the cytoplasm; this interaction stimulates binding of NASP to H1-6/H1T. As to expression, isoform 1 is testis- and sperm-specific.

The protein resides in the cytoplasm. It localises to the nucleus. Functionally, component of the histone chaperone network. Binds and stabilizes histone H3-H4 not bound to chromatin to maintain a soluble reservoir and modulate degradation by chaperone-mediated autophagy. Required for DNA replication, normal cell cycle progression and cell proliferation. Forms a cytoplasmic complex with HSP90 and H1 linker histones and stimulates HSP90 ATPase activity. NASP and H1 histone are subsequently released from the complex and translocate to the nucleus where the histone is released for binding to DNA. Stabilizes soluble histone H3-H4. The protein is Nuclear autoantigenic sperm protein (NASP) of Homo sapiens (Human).